Here is a 252-residue protein sequence, read N- to C-terminus: GPI alpha-1,4-mannosyltransferase I, stabilizing subunit (252 aa).

The first 22 residues, 1 to 22 (MAASALAWLLLWAAGLVGRLAA), serve as a signal peptide directing secretion. 2 N-linked (GlcNAc...) asparagine glycosylation sites follow: asparagine 97 and asparagine 209. The chain crosses the membrane as a helical span at residues 225–245 (VCSVTLLITVLCSTLILLAVF).

This sequence belongs to the PIGX family. In terms of assembly, part of the glycosylphosphatidylinositol-mannosyltransferase I complex that is composed of PIGM and PIGX. Interacts with PIGM; PIGX stabilizes PIGM.

It is found in the endoplasmic reticulum membrane. It functions in the pathway glycolipid biosynthesis; glycosylphosphatidylinositol-anchor biosynthesis. In terms of biological role, stabilizing subunit of the glycosylphosphatidylinositol-mannosyltransferase I complex which catalyzes the transfer of the first mannose, via an alpha-1,4 bond from a dolichol-phosphate-mannose (Dol-P-Man) to the glucosaminyl acyl phosphatidylinositol (GlcN-(acyl)PI) intermediate to generate alpha-D-Man-(1-&gt;4)-alpha-D-GlcN-(1-&gt;6)-(1-radyl,2-acyl-sn-glycero-3-phospho)-2-acyl-inositol and participates in the sixth step of the glycosylphosphatidylinositol-anchor biosynthesis. Probably acts by stabilizing the mannosyltransferase PIGM. This is GPI alpha-1,4-mannosyltransferase I, stabilizing subunit from Rattus norvegicus (Rat).